We begin with the raw amino-acid sequence, 419 residues long: Histidine--tRNA ligase (419 aa).

The protein belongs to the class-II aminoacyl-tRNA synthetase family. Homodimer.

The protein resides in the cytoplasm. The enzyme catalyses tRNA(His) + L-histidine + ATP = L-histidyl-tRNA(His) + AMP + diphosphate + H(+). The polypeptide is Histidine--tRNA ligase (Trichlorobacter lovleyi (strain ATCC BAA-1151 / DSM 17278 / SZ) (Geobacter lovleyi)).